The sequence spans 474 residues: SHC-transforming protein 3 (474 aa).

A disordered region spans residues 1-27; that stretch reads MSATRKSRAGDEPLPRPPRGAPHTSDQ. The PID domain occupies 29-214; sequence LGPGVTYVVK…LDEPWTEEEG (186 aa). A CH1 region spans residues 215–378; sequence DGPDHPYYNS…RMLEELNAEP (164 aa). The residue at position 282 (Ser-282) is a Phosphoserine. Residues 308–328 are disordered; the sequence is QPVPPQVWPAATSSTESSPRK. The SH2 domain occupies 379-470; it reads WYQGEMSRKE…GSELCLQQPV (92 aa).

Interacts with the Trk receptors in a phosphotyrosine-dependent manner. Once activated, binds to GRB2. Interacts with activated EGF receptors. Tyrosine phosphorylated. As to expression, predominantly expressed in the adult brain.

In terms of biological role, signaling adapter that couples activated growth factor receptors to signaling pathway in neurons. Involved in the signal transduction pathways of neurotrophin-activated Trk receptors in cortical neurons. This is SHC-transforming protein 3 (Shc3) from Mus musculus (Mouse).